A 1162-amino-acid polypeptide reads, in one-letter code: PAN2-PAN3 deadenylation complex catalytic subunit PAN2 (1162 aa).

WD repeat units lie at residues 27 to 66, 153 to 193, 196 to 233, and 300 to 339; these read AKEK…YTRH, NTVQ…VVKT, GHSC…NVYD, and HPCQ…TGFT. The tract at residues 341 to 491 is linker; sequence TATTILEYPD…LMNYKPSNDR (151 aa). The disordered stretch occupies residues 401 to 443; it reads VPLPPKSSAASSSHTALSTSSDSRPNTARSGNPSSGGQKYRLL. The segment covering 407–423 has biased composition (low complexity); sequence SSAASSSHTALSTSSDS. Residues 424–437 are compositionally biased toward polar residues; it reads RPNTARSGNPSSGG. The USP domain maps to 492 to 904; that stretch reads EVPPAFTKLQ…TPEIAIYSDA (413 aa). Positions 956–1126 constitute an Exonuclease domain; it reads VALDAEFVAL…IEDAYTALVL (171 aa). Residues aspartate 959, glutamate 961, aspartate 1068, and aspartate 1119 each contribute to the a divalent metal cation site.

Belongs to the peptidase C19 family. PAN2 subfamily. Forms a heterotrimer with an asymmetric homodimer of the regulatory subunit PAN3 to form the poly(A)-nuclease (PAN) deadenylation complex. A divalent metal cation is required as a cofactor.

The protein resides in the cytoplasm. The enzyme catalyses Exonucleolytic cleavage of poly(A) to 5'-AMP.. With respect to regulation, positively regulated by the regulatory subunit PAN3. In terms of biological role, catalytic subunit of the poly(A)-nuclease (PAN) deadenylation complex, one of two cytoplasmic mRNA deadenylases involved in mRNA turnover. PAN specifically shortens poly(A) tails of RNA and the activity is stimulated by poly(A)-binding protein PAB1. PAN deadenylation is followed by rapid degradation of the shortened mRNA tails by the CCR4-NOT complex. Deadenylated mRNAs are then degraded by two alternative mechanisms, namely exosome-mediated 3'-5' exonucleolytic degradation, or deadenylation-dependent mRNA decaping and subsequent 5'-3' exonucleolytic degradation by XRN1. May also be involved in post-transcriptional maturation of mRNA poly(A) tails. The polypeptide is PAN2-PAN3 deadenylation complex catalytic subunit PAN2 (Eremothecium gossypii (strain ATCC 10895 / CBS 109.51 / FGSC 9923 / NRRL Y-1056) (Yeast)).